Consider the following 392-residue polypeptide: MTLRKWQRVVLIVLDGVGVGGQPDASAYGDQGASTLPHVAERCGGLKLPTLEKLGLGRIVPIAGVDAVAEPSALYGRMLERSKGKDTTTGHWELAGLVQGEPFASYPKGFPDEIIDAFAGLAGVRPLGNIAASGTEILKQLGMEHLQTGRPIVYTSVDSVFQIAAHEEVMSCEALYALCEGMRKVLDRYRVGRVIARPFVGTSAENFERTSGRRDFAMPPQGDTLLNDMQNAGMTVLGVGKISDIFAGQGISRALKSTDNADGMRKTREALAQIERGLVFTNLVDFDMLYGHRLDALGFGRALEEFDAWLGGFLADFRDSDLLIITADHGCDPTTPGTDHTRESVPLLVWSPALVCGQDLGVRESFSDAAATIADLFDLEIRTGQSFMDRLL.

Positions 15, 287, 292, 328, 329, and 340 each coordinate Mn(2+).

It belongs to the phosphopentomutase family. Requires Mn(2+) as cofactor.

The protein resides in the cytoplasm. The catalysed reaction is 2-deoxy-alpha-D-ribose 1-phosphate = 2-deoxy-D-ribose 5-phosphate. The enzyme catalyses alpha-D-ribose 1-phosphate = D-ribose 5-phosphate. It participates in carbohydrate degradation; 2-deoxy-D-ribose 1-phosphate degradation; D-glyceraldehyde 3-phosphate and acetaldehyde from 2-deoxy-alpha-D-ribose 1-phosphate: step 1/2. In terms of biological role, isomerase that catalyzes the conversion of deoxy-ribose 1-phosphate (dRib-1-P) and ribose 1-phosphate (Rib-1-P) to deoxy-ribose 5-phosphate (dRib-5-P) and ribose 5-phosphate (Rib-5-P), respectively. The protein is Phosphopentomutase of Syntrophotalea carbinolica (strain DSM 2380 / NBRC 103641 / GraBd1) (Pelobacter carbinolicus).